Reading from the N-terminus, the 92-residue chain is Small ribosomal subunit protein uS19c (92 aa).

It belongs to the universal ribosomal protein uS19 family.

Its subcellular location is the plastid. The protein resides in the chloroplast. In terms of biological role, protein S19 forms a complex with S13 that binds strongly to the 16S ribosomal RNA. This is Small ribosomal subunit protein uS19c from Nandina domestica (Heavenly bamboo).